The sequence spans 157 residues: Protein Smg homolog (157 aa).

Belongs to the Smg family.

The sequence is that of Protein Smg homolog from Idiomarina loihiensis (strain ATCC BAA-735 / DSM 15497 / L2-TR).